The chain runs to 999 residues: Lysosomal alpha-mannosidase (999 aa).

The tract at residues 1–25 (MVGDARPSGVRAGGCRGAVGSRTSS) is disordered. Positions 1 to 50 (MVGDARPSGVRAGGCRGAVGSRTSSRALRPPLPPLSSLFVLFLAAPCAWA) are cleaved as a signal peptide. 2 residues coordinate Zn(2+): histidine 73 and aspartate 75. The N-linked (GlcNAc...) asparagine glycan is linked to asparagine 134. A Zn(2+)-binding site is contributed by aspartate 197. The active-site Nucleophile is aspartate 197. The cysteines at positions 269 and 274 are disulfide-linked. Asparagine 369 carries N-linked (GlcNAc...) asparagine glycosylation. Position 448 (histidine 448) interacts with Zn(2+). A disulfide bond links cysteine 495 and cysteine 503. Asparagine 499 is a glycosylation site (N-linked (GlcNAc...) asparagine). Positions 591–621 (SRDLVIQNEYLRARFDPNTGLLMELENLEQN) are excised as a propeptide. Residues asparagine 634, asparagine 640, asparagine 681, asparagine 755, and asparagine 919 are each glycosylated (N-linked (GlcNAc...) asparagine).

It belongs to the glycosyl hydrolase 38 family. As to quaternary structure, homodimer. It depends on Zn(2+) as a cofactor. Processed into 5 peptides of 35/38 kDa (A), 11/13 kDa (B) and 22 kDa (C), 38 kDa (D) and 13/15 kDa (E). The A, B and C peptides are disulfide-linked into a 67 kDa complex. Post-translationally, heavily glycosylated. Some sugar chains are of the high-mannose type.

It is found in the lysosome. The catalysed reaction is Hydrolysis of terminal, non-reducing alpha-D-mannose residues in alpha-D-mannosides.. Its function is as follows. Necessary for the catabolism of N-linked carbohydrates released during glycoprotein turnover. The protein is Lysosomal alpha-mannosidase (MAN2B1) of Bos taurus (Bovine).